A 173-amino-acid chain; its full sequence is Adenine phosphoribosyltransferase (173 aa).

The protein belongs to the purine/pyrimidine phosphoribosyltransferase family. Homodimer.

It is found in the cytoplasm. It carries out the reaction AMP + diphosphate = 5-phospho-alpha-D-ribose 1-diphosphate + adenine. It participates in purine metabolism; AMP biosynthesis via salvage pathway; AMP from adenine: step 1/1. Catalyzes a salvage reaction resulting in the formation of AMP, that is energically less costly than de novo synthesis. In Thermotoga maritima (strain ATCC 43589 / DSM 3109 / JCM 10099 / NBRC 100826 / MSB8), this protein is Adenine phosphoribosyltransferase.